The chain runs to 152 residues: Snaclec coagulation factor IX/factor X-binding protein subunit A (152 aa).

An N-terminal signal peptide occupies residues 1–23 (MGRFIFVSFGLLVVAASLSGTGA). 3 cysteine pairs are disulfide-bonded: cysteine 25/cysteine 36, cysteine 53/cysteine 150, and cysteine 125/cysteine 142. Residues 32–151 (YEGHCYKAFE…CGQRIPFVCE (120 aa)) form the C-type lectin domain. Positions 64, 66, and 70 each coordinate Ca(2+). Glutamate 151 lines the Ca(2+) pocket.

It belongs to the snaclec family. Heterodimer of subunits A and B; disulfide-linked. As to expression, expressed by the venom gland.

It localises to the secreted. Its function is as follows. Anticoagulant protein which binds to the gamma-carboxyglutamic acid-domain regions of factors IX (F9) and factor X (F10) in the presence of calcium with a 1 to 1 stoichiometry. The protein is Snaclec coagulation factor IX/factor X-binding protein subunit A of Trimeresurus stejnegeri (Chinese green tree viper).